A 399-amino-acid chain; its full sequence is Cyclic dehypoxanthine futalosine synthase (399 aa).

Residues 56–288 (ATYIIERNIN…IAIARVFLDN (233 aa)) form the Radical SAM core domain. Residues cysteine 70, cysteine 74, and cysteine 77 each contribute to the [4Fe-4S] cluster site.

This sequence belongs to the radical SAM superfamily. MqnC family. [4Fe-4S] cluster is required as a cofactor.

The enzyme catalyses dehypoxanthine futalosine + S-adenosyl-L-methionine = cyclic dehypoxanthinylfutalosinate + 5'-deoxyadenosine + L-methionine + H(+). It functions in the pathway quinol/quinone metabolism; menaquinone biosynthesis. Functionally, radical SAM enzyme that catalyzes the cyclization of dehypoxanthine futalosine (DHFL) into cyclic dehypoxanthine futalosine (CDHFL), a step in the biosynthesis of menaquinone (MK, vitamin K2). This chain is Cyclic dehypoxanthine futalosine synthase, found in Streptomyces coelicolor (strain ATCC BAA-471 / A3(2) / M145).